Reading from the N-terminus, the 561-residue chain is Cytochrome P450 monooxygenase iboC (561 aa).

Residues Arg8–Ala28 form a helical membrane-spanning segment. Cys484 lines the heme pocket.

Belongs to the cytochrome P450 family. The cofactor is heme.

Its subcellular location is the membrane. Its pathway is secondary metabolite biosynthesis. In terms of biological role, cytochrome P450 monooxygenase; part of the gene cluster that mediates the biosynthesis of the psychoactive metabolites ibotenic acid and muscimol. The first committed step is glutamate hydroxylation by the 2-oxoglutarate-dependent dioxygenase iboH, and the last step is decarboxylation of ibotenic acid to muscimol by the decarboxylase iboD. The order of the intermediate reactions is somewhat ambiguous. IboA likely activates the carboxylic acid at position 5 to introduce an amide bond, and the flavin monooxygenase iboF generates the N-O bond. There are several options for the latter step. One option is that iboF directly hydroxylates the amide nitrogen formed by iboA to produce a hydroxamic acid species. Another option is that iboF hydroxylates an external N-containing compound, whose resulting N-O bond is subsequently introduced into the hydroxyglutamate scaffold. The paralogous PLP-dependent cystathionine gamma-synthase-like enzymes iboG1 and iboG2 are likely involved in substitution of the OH group at position 3 by the O-N moiety. The first cyclic intermediate is most probably tricholomic acid which is likely desaturated to ibotenic acid by the cytochrome P450 monooxygenase iboC. The chain is Cytochrome P450 monooxygenase iboC from Amanita muscaria (strain Koide BX008).